Reading from the N-terminus, the 398-residue chain is Homocysteine-responsive endoplasmic reticulum-resident ubiquitin-like domain member 2 protein (398 aa).

The Ubiquitin-like domain occupies 11 to 90 (VTLVIKAPNQ…HMVHLVCASR (80 aa)). Disordered stretches follow at residues 90 to 143 (RTPP…SIRH) and 212 to 247 (NQST…NVAP). A compositionally biased stretch (low complexity) spans 96 to 125 (PKASKSSKSMGTSSSGRSSSSGSANPGSTS). Residues 233-245 (NPPPNPPRAPPNV) are compositionally biased toward pro residues. The helical transmembrane segment at 298–318 (FVMVMGALILVYMHQAGWFPL) threads the bilayer.

It localises to the membrane. Its function is as follows. Could be involved in the unfolded protein response (UPR) pathway. In Xenopus laevis (African clawed frog), this protein is Homocysteine-responsive endoplasmic reticulum-resident ubiquitin-like domain member 2 protein (herpud2).